The sequence spans 136 residues: Galectin-7 (136 aa).

The 131-residue stretch at 6–136 (HKTSLPQGVR…DVQLHSLNIF (131 aa)) folds into the Galectin domain. Residue 70–76 (WGREERG) participates in a beta-D-galactoside binding.

As to quaternary structure, monomer.

Its subcellular location is the cytoplasm. It localises to the nucleus. The protein resides in the secreted. Could be involved in cell-cell and/or cell-matrix interactions necessary for normal growth control. Pro-apoptotic protein that functions intracellularly upstream of JNK activation and cytochrome c release. This chain is Galectin-7 (Lgals7), found in Mus musculus (Mouse).